Here is a 134-residue protein sequence, read N- to C-terminus: ATP synthase epsilon chain (134 aa).

Belongs to the ATPase epsilon chain family. As to quaternary structure, F-type ATPases have 2 components, CF(1) - the catalytic core - and CF(0) - the membrane proton channel. CF(1) has five subunits: alpha(3), beta(3), gamma(1), delta(1), epsilon(1). CF(0) has three main subunits: a, b and c.

Its subcellular location is the cellular thylakoid membrane. Its function is as follows. Produces ATP from ADP in the presence of a proton gradient across the membrane. This is ATP synthase epsilon chain from Prochlorococcus marinus (strain MIT 9312).